The primary structure comprises 463 residues: Argininosuccinate lyase (463 aa).

Belongs to the lyase 1 family. Argininosuccinate lyase subfamily.

It is found in the cytoplasm. The catalysed reaction is 2-(N(omega)-L-arginino)succinate = fumarate + L-arginine. It participates in amino-acid biosynthesis; L-arginine biosynthesis; L-arginine from L-ornithine and carbamoyl phosphate: step 3/3. In Methylorubrum populi (strain ATCC BAA-705 / NCIMB 13946 / BJ001) (Methylobacterium populi), this protein is Argininosuccinate lyase.